The sequence spans 1487 residues: Protein clueless (1487 aa).

Disordered regions lie at residues Met1–Ala94 and Gly110–Ala140. Basic residues predominate over residues Thr56 to Asn65. The segment covering Ala111–Ser126 has biased composition (low complexity). Ser284 bears the Phosphoserine mark. The Clu domain maps to Arg438–Leu680. A compositionally biased stretch (basic and acidic residues) spans Gln739–Lys785. 2 disordered regions span residues Gln739 to Ala794 and Val980 to Thr1040. Residues Lys988–Lys1005 are compositionally biased toward basic residues. A compositionally biased stretch (polar residues) spans Pro1009–Gln1019. Positions Asn1020–Thr1040 are enriched in low complexity. TPR repeat units lie at residues Ala1140 to Val1173, Ala1266 to Tyr1299, and Gly1301 to Thr1334. Residues Asp1456–Ser1487 form a disordered region. The segment covering Thr1470–Ser1487 has biased composition (polar residues).

Belongs to the CLU family.

It localises to the cytoplasm. MRNA-binding protein involved in proper cytoplasmic distribution of mitochondria. The protein is Protein clueless of Drosophila mojavensis (Fruit fly).